The primary structure comprises 226 residues: AA9 family lytic polysaccharide monooxygenase E (226 aa).

The N-terminal stretch at 1–18 (MLANGAIVFLAAALGVSG) is a signal peptide. Residue H19 coordinates Cu(2+). Intrachain disulfides connect C56–C174 and C144–C226. N69 carries an N-linked (GlcNAc...) asparagine glycan. H86 is a Cu(2+) binding site. 2 residues coordinate O2: H160 and Q169. Residue Y171 coordinates Cu(2+).

This sequence belongs to the polysaccharide monooxygenase AA9 family. Requires Cu(2+) as cofactor.

It localises to the secreted. It catalyses the reaction [(1-&gt;4)-beta-D-glucosyl]n+m + reduced acceptor + O2 = 4-dehydro-beta-D-glucosyl-[(1-&gt;4)-beta-D-glucosyl]n-1 + [(1-&gt;4)-beta-D-glucosyl]m + acceptor + H2O.. In terms of biological role, lytic polysaccharide monooxygenase (LPMO) that depolymerizes crystalline and amorphous polysaccharides via the oxidation of scissile alpha- or beta-(1-4)-glycosidic bonds, yielding C1 and C4 oxidation products. Catalysis by LPMOs requires the reduction of the active-site copper from Cu(II) to Cu(I) by a reducing agent and H(2)O(2) or O(2) as a cosubstrate. Shows endoglucanase activity on tamarind xyloglucan, as well as on beechwood xylan when combined with phosphoric acid swollen cellulose (PASC). Shows no activity on wheat arabinoxylan, konjac glucomannan, acetylated spruce galactoglucomannan, or cellopentaose. The polypeptide is AA9 family lytic polysaccharide monooxygenase E (Thermothielavioides terrestris (strain ATCC 38088 / NRRL 8126) (Thielavia terrestris)).